Reading from the N-terminus, the 261-residue chain is Acyl-[acyl-carrier-protein]--UDP-N-acetylglucosamine O-acyltransferase (261 aa).

It belongs to the transferase hexapeptide repeat family. LpxA subfamily. Homotrimer.

The protein localises to the cytoplasm. It catalyses the reaction a (3R)-hydroxyacyl-[ACP] + UDP-N-acetyl-alpha-D-glucosamine = a UDP-3-O-[(3R)-3-hydroxyacyl]-N-acetyl-alpha-D-glucosamine + holo-[ACP]. The protein operates within glycolipid biosynthesis; lipid IV(A) biosynthesis; lipid IV(A) from (3R)-3-hydroxytetradecanoyl-[acyl-carrier-protein] and UDP-N-acetyl-alpha-D-glucosamine: step 1/6. Functionally, involved in the biosynthesis of lipid A, a phosphorylated glycolipid that anchors the lipopolysaccharide to the outer membrane of the cell. The protein is Acyl-[acyl-carrier-protein]--UDP-N-acetylglucosamine O-acyltransferase of Aquifex aeolicus (strain VF5).